The primary structure comprises 94 residues: MKYNVDTVRESGWYNKKEWLAVRDYVRQRDKMTCVRCGAFGAKKYEVDHIVELTWENLDDWNIALNPDNLQLLCKSCHNKKTSEYKRGKGVSLW.

It belongs to the skunalikevirus HNH endonuclease family.

Functionally, probable HNH endonuclease. This chain is Probable HNH endonuclease, found in Lactococcus lactis (Lactococcus lactis bacteriophage SK1).